We begin with the raw amino-acid sequence, 990 residues long: DNA ligase 4 (990 aa).

Positions 57-84 (TQKKGRQPPGPRRKAGPHGHSNLSPHEA) are disordered. ATP-binding residues include Glu-324, Lys-326, Leu-327, Arg-331, Glu-394, Phe-436, Glu-496, Lys-501, Lys-518, and Lys-520. Lys-326 functions as the N6-AMP-lysine intermediate in the catalytic mechanism. Residue Glu-394 coordinates Mg(2+). Glu-496 is a Mg(2+) binding site. BRCT domains follow at residues 728 to 821 (PQSK…LPYL) and 900 to 989 (YMFS…RYQW).

It belongs to the ATP-dependent DNA ligase family. Mg(2+) is required as a cofactor.

It is found in the nucleus. It carries out the reaction ATP + (deoxyribonucleotide)n-3'-hydroxyl + 5'-phospho-(deoxyribonucleotide)m = (deoxyribonucleotide)n+m + AMP + diphosphate.. Its function is as follows. DNA ligase involved in DNA non-homologous end joining (NHEJ); required for double-strand break (DSB) repair. The sequence is that of DNA ligase 4 (LIG4) from Phaeosphaeria nodorum (strain SN15 / ATCC MYA-4574 / FGSC 10173) (Glume blotch fungus).